A 209-amino-acid polypeptide reads, in one-letter code: MTCGSGNGSSEQELKAIVRDLGCGPYFLGTFDKRFPGFMAPDKLACAIVNTAGRETGGEHWLAFGWNPRYNTCYLFDPFGFSDERLKQIYQFEYEGLLRRSALATKDRCITLEKSTQSVQGPRSAACGLFCCMFLHAFVHWPDRPMDGNPTMKLVTGVSNSMLQSPQVQPTLRRNQEVLYRFLNTHSSYFRSHRARIERATAFDRMDMQ.

Residues His60, Asp77, and Cys127 contribute to the active site.

It belongs to the peptidase C5 family. In terms of assembly, interacts with protease cofactor pVI-C; this interaction is necessary for protease activation.

It localises to the virion. The protein localises to the host nucleus. The enzyme catalyses Cleaves proteins of the adenovirus and its host cell at two consensus sites: -Yaa-Xaa-Gly-Gly-|-Xaa- and -Yaa-Xaa-Gly-Xaa-|-Gly- (in which Yaa is Met, Ile or Leu, and Xaa is any amino acid).. With respect to regulation, requires DNA and protease cofactor for maximal activation. Inside nascent virions, becomes partially activated by binding to the viral DNA, allowing it to cleave the cofactor that binds to the protease and fully activates it. Actin, like the viral protease cofactor, seems to act as a cofactor in the cleavage of cytokeratin 18 and of actin itself. Functionally, cleaves viral precursor proteins (pTP, pIIIa, pVI, pVII, pVIII, and pX) inside newly assembled particles giving rise to mature virions. Protease complexed to its cofactor slides along the viral DNA to specifically locate and cleave the viral precursors. Mature virions have a weakened organization compared to the unmature virions, thereby facilitating subsequent uncoating. Without maturation, the particle lacks infectivity and is unable to uncoat. Late in adenovirus infection, in the cytoplasm, may participate in the cytoskeleton destruction. Cleaves host cell cytoskeletal keratins K7 and K18. The chain is Protease from Homo sapiens (Human).